A 128-amino-acid chain; its full sequence is Histone H2A (128 aa).

The segment at 1-22 (MSGRGKTGGKARAKAKTRSSRA) is disordered. Ser2 is subject to N-acetylserine. Residue Ser2 is modified to Phosphoserine. An N6-(2-hydroxyisobutyryl)lysine modification is found at Lys6. Position 6 is an N6-acetyllysine (Lys6). Residues 7–19 (TGGKARAKAKTRS) show a composition bias toward basic residues. Residue Lys10 is modified to N6-(2-hydroxyisobutyryl)lysine; alternate. Lys10 is modified (N6-lactoyllysine; alternate). Position 10 is an N6-succinyllysine (Lys10). Residues Lys14 and Lys16 each participate in a glycyl lysine isopeptide (Lys-Gly) (interchain with G-Cter in ubiquitin) cross-link. Lys37 carries the post-translational modification N6-(2-hydroxyisobutyryl)lysine; alternate. An N6-(2-hydroxyisobutyryl)lysine mark is found at Lys75 and Lys76. Lys96 carries the post-translational modification N6-(2-hydroxyisobutyryl)lysine; alternate. The residue at position 96 (Lys96) is an N6-succinyllysine. Lys96 is subject to N6-glutaryllysine; alternate. Gln105 bears the N5-methylglutamine mark. Lys119 is modified (N6-(2-hydroxyisobutyryl)lysine; alternate). Lys119, Lys120, and Lys126 each carry N6-glutaryllysine; alternate. A Glycyl lysine isopeptide (Lys-Gly) (interchain with G-Cter in ubiquitin) cross-link involves residue Lys120.

In terms of assembly, the nucleosome is a histone octamer containing two molecules each of H2A, H2B, H3 and H4 assembled in one H3-H4 heterotetramer and two H2A-H2B heterodimers. The octamer wraps approximately 147 bp of DNA. Monoubiquitination of Lys-120 (H2AK119Ub) gives a specific tag for epigenetic transcriptional repression. Following DNA double-strand breaks (DSBs), it is ubiquitinated through 'Lys-63' linkage of ubiquitin moieties, leading to the recruitment of repair proteins to sites of DNA damage. H2AK119Ub and ionizing radiation-induced 'Lys-63'-linked ubiquitination are distinct events. Post-translationally, phosphorylation on Ser-2 is enhanced during mitosis. Phosphorylation on Ser-2 directly represses transcription. In terms of processing, glutamine methylation at Gln-105 (H2AQ104me) by FBL is specifically dedicated to polymerase I. It is present at 35S ribosomal DNA locus and impairs binding of the FACT complex. As to expression, expressed and secreted by skin epithelium.

The protein resides in the nucleus. The protein localises to the chromosome. Core component of nucleosome. Nucleosomes wrap and compact DNA into chromatin, limiting DNA accessibility to the cellular machineries which require DNA as a template. Histones thereby play a central role in transcription regulation, DNA repair, DNA replication and chromosomal stability. DNA accessibility is regulated via a complex set of post-translational modifications of histones, also called histone code, and nucleosome remodeling. Functionally, the secreted form has antibacterial activity against Gram-positive bacteria and antifungal activity against S.cerevisiae. This chain is Histone H2A, found in Oncorhynchus mykiss (Rainbow trout).